Reading from the N-terminus, the 386-residue chain is 1-deoxy-D-xylulose 5-phosphate reductoisomerase (386 aa).

NADPH contacts are provided by T7, G8, S9, I10, A33, and N124. K125 serves as a coordination point for 1-deoxy-D-xylulose 5-phosphate. E126 lines the NADPH pocket. Residue D148 coordinates Mn(2+). S149, E150, S174, and H197 together coordinate 1-deoxy-D-xylulose 5-phosphate. E150 contributes to the Mn(2+) binding site. G203 lines the NADPH pocket. Positions 210, 215, 216, and 219 each coordinate 1-deoxy-D-xylulose 5-phosphate. E219 contributes to the Mn(2+) binding site.

This sequence belongs to the DXR family. Requires Mg(2+) as cofactor. The cofactor is Mn(2+).

The catalysed reaction is 2-C-methyl-D-erythritol 4-phosphate + NADP(+) = 1-deoxy-D-xylulose 5-phosphate + NADPH + H(+). It functions in the pathway isoprenoid biosynthesis; isopentenyl diphosphate biosynthesis via DXP pathway; isopentenyl diphosphate from 1-deoxy-D-xylulose 5-phosphate: step 1/6. Catalyzes the NADPH-dependent rearrangement and reduction of 1-deoxy-D-xylulose-5-phosphate (DXP) to 2-C-methyl-D-erythritol 4-phosphate (MEP). This is 1-deoxy-D-xylulose 5-phosphate reductoisomerase from Kitasatospora griseola (Streptomyces griseolosporeus).